A 437-amino-acid polypeptide reads, in one-letter code: MTTSTLQKAIDLVTKATEEDKAKNYEEALRLYQHAVEYFLHAIKYEAHSDKAKESIRAKCMQYLDRAEKLKDYLRNKEKHGKKPVKENQSEGKGSDSDSEGDNPEKKKLQEQLMGAVVMEKPNIRWNDVAGLEGAKEALKEAVILPIKFPHLFTGKRTPWRGILLFGPPGTGKSYLAKAVATEANNSTFFSVSSSDLMSKWLGESEKLVKNLFELARQHKPSIIFIDEVDSLCGSRNENESEAARRIKTEFLVQMQGVGNNNDGTLVLGATNIPWVLDSAIRRRFEKRIYIPLPEEAARAQMFRLHLGSTPHNLTDANIHELARKTEGYSGADISIIVRDSLMQPVRKVQSATHFKKVCGPSRTNPSVMIDDLLTPCSPGDPGAIEMTWMDVPGDKLLEPVVCMSDMLRSLATTRPTVNADDLLKVKKFSEDFGQES.

The 79-residue stretch at 2–80 (TTSTLQKAID…KDYLRNKEKH (79 aa)) folds into the MIT domain. Lys-8 is modified (N6-acetyllysine). The stretch at 15 to 37 (KATEEDKAKNYEEALRLYQHAVE) forms a coiled coil. A disordered region spans residues 75–106 (RNKEKHGKKPVKENQSEGKGSDSDSEGDNPEK). Residues 84–96 (PVKENQSEGKGSD) are compositionally biased toward basic and acidic residues. A phosphoserine mark is found at Ser-95 and Ser-97. 167–174 (GPPGTGKS) contributes to the ATP binding site.

It belongs to the AAA ATPase family. In terms of assembly, proposed to be monomeric or homodimeric in nucleotide-free form and to oligomerize upon binding to ATP to form two stacked hexameric or heptameric rings with a central pore through which ESCRT-III substrates are translocated in an ATP-dependent manner. Interacts with CHMP1A, CHMP1B, CHMP2A, CHMP2B, CHMP3, CHMP4A, CHMP4B, CHMP4C and CHMP6. Interacts with VPS4B; the interaction suggests a heteromeric assembly with VPS4B. Interacts with SPAST. Interacts with IST1. Interacts with ZFYVE19/ANCHR; leading to retain it at midbody. As to expression, highly expressed in testis and moderately in heart and brain. Not detected in spleen, lung, liver, skeletal muscle or kidney.

It localises to the late endosome membrane. It is found in the midbody. The protein localises to the cytoplasm. Its subcellular location is the cytoskeleton. The protein resides in the spindle. The catalysed reaction is ATP + H2O = ADP + phosphate + H(+). In terms of biological role, involved in late steps of the endosomal multivesicular bodies (MVB) pathway. Recognizes membrane-associated ESCRT-III assemblies and catalyzes their disassembly, possibly in combination with membrane fission. Redistributes the ESCRT-III components to the cytoplasm for further rounds of MVB sorting. MVBs contain intraluminal vesicles (ILVs) that are generated by invagination and scission from the limiting membrane of the endosome and mostly are delivered to lysosomes enabling degradation of membrane proteins, such as stimulated growth factor receptors, lysosomal enzymes and lipids. It is required for proper accomplishment of various processes including the regulation of endosome size, primary cilium organization, mitotic spindle organization and chromosome segregation, and nuclear envelope sealing and spindle disassembly during anaphase. In conjunction with the ESCRT machinery also appears to function in topologically equivalent membrane fission events, such as the terminal stages of cytokinesis. Involved in cytokinesis: retained at the midbody by ZFYVE19/ANCHR and CHMP4C until abscission checkpoint signaling is terminated at late cytokinesis. It is then released following dephosphorylation of CHMP4C, leading to abscission. VPS4A/B are required for the exosomal release of SDCBP, CD63 and syndecan. Critical for normal erythroblast cytokinesis and correct erythropoiesis. This is Vacuolar protein sorting-associated protein 4A from Mus musculus (Mouse).